A 189-amino-acid polypeptide reads, in one-letter code: MYKEPFGVKVDFETGIIEGAKKSVRRLSDMEGYFVDERAWKELVEKEDPVVYEVYAVEQEEKEGDLNFATTVLYPGKVGKEFFFTKGHFHAKLDRAEVYVALKGKGGMLLQTPEGDAKWISMEPGTVVYVPPYWAHRTVNIGDEPFIFLAIYPADAGHDYGTIAEKGFSKIVIEENGEVKVVDNPRWKK.

The Fe cation site is built by His-88, His-90, Glu-97, and His-136.

This sequence belongs to the archaeal-type GPI family. In terms of assembly, homodimer. Fe cation serves as cofactor.

It is found in the cytoplasm. It carries out the reaction alpha-D-glucose 6-phosphate = beta-D-fructose 6-phosphate. It functions in the pathway carbohydrate degradation; glycolysis; D-glyceraldehyde 3-phosphate and glycerone phosphate from D-glucose: step 2/4. Its activity is regulated as follows. Inhibited by mannose 6-phosphate, fructose 1-phosphate and fructose 1,6-bisphosphate. This is Glucose-6-phosphate isomerase (pgiA) from Pyrococcus furiosus (strain ATCC 43587 / DSM 3638 / JCM 8422 / Vc1).